Here is a 359-residue protein sequence, read N- to C-terminus: Phospho-N-acetylmuramoyl-pentapeptide-transferase (359 aa).

The next 10 membrane-spanning stretches (helical) occupy residues 3 to 23 (QILI…PALI), 55 to 75 (VAII…GLAF), 80 to 100 (ISAS…VGFL), 117 to 137 (TAKT…ALGF), 156 to 176 (IATV…VVSA), 187 to 207 (LDGL…LITF), 231 to 251 (LAIV…WNAA), 255 to 275 (IFMG…ISVT), 280 to 300 (ILAV…VLQI), and 334 to 354 (FWLL…GEWL).

It belongs to the glycosyltransferase 4 family. MraY subfamily. The cofactor is Mg(2+).

The protein resides in the cell membrane. The catalysed reaction is UDP-N-acetyl-alpha-D-muramoyl-L-alanyl-gamma-D-glutamyl-meso-2,6-diaminopimeloyl-D-alanyl-D-alanine + di-trans,octa-cis-undecaprenyl phosphate = di-trans,octa-cis-undecaprenyl diphospho-N-acetyl-alpha-D-muramoyl-L-alanyl-D-glutamyl-meso-2,6-diaminopimeloyl-D-alanyl-D-alanine + UMP. Its pathway is cell wall biogenesis; peptidoglycan biosynthesis. Its function is as follows. Catalyzes the initial step of the lipid cycle reactions in the biosynthesis of the cell wall peptidoglycan: transfers peptidoglycan precursor phospho-MurNAc-pentapeptide from UDP-MurNAc-pentapeptide onto the lipid carrier undecaprenyl phosphate, yielding undecaprenyl-pyrophosphoryl-MurNAc-pentapeptide, known as lipid I. In Mycolicibacterium paratuberculosis (strain ATCC BAA-968 / K-10) (Mycobacterium paratuberculosis), this protein is Phospho-N-acetylmuramoyl-pentapeptide-transferase.